The primary structure comprises 316 residues: Methionyl-tRNA formyltransferase (316 aa).

112–115 is a binding site for (6S)-5,6,7,8-tetrahydrofolate; it reads SLLP.

The protein belongs to the Fmt family.

The enzyme catalyses L-methionyl-tRNA(fMet) + (6R)-10-formyltetrahydrofolate = N-formyl-L-methionyl-tRNA(fMet) + (6S)-5,6,7,8-tetrahydrofolate + H(+). Its function is as follows. Attaches a formyl group to the free amino group of methionyl-tRNA(fMet). The formyl group appears to play a dual role in the initiator identity of N-formylmethionyl-tRNA by promoting its recognition by IF2 and preventing the misappropriation of this tRNA by the elongation apparatus. This chain is Methionyl-tRNA formyltransferase, found in Actinobacillus pleuropneumoniae serotype 5b (strain L20).